The sequence spans 164 residues: Histone H1 (164 aa).

Positions 1–10 are enriched in polar residues; the sequence is MAPRSSTSKS. The tract at residues 1-164 is disordered; the sequence is MAPRSSTSKS…KKSSKPAKKN (164 aa). Basic residues predominate over residues 16 to 27; it reads KDHKKAPIKKAI. 2 positions are modified to phosphothreonine: Thr47 and Thr54. 3 stretches are compositionally biased toward basic and acidic residues: residues 49–61, 69–89, and 117–156; these read VKKD…ADTK, TMKE…GDKK, and TKKE…DAKK.

In terms of processing, cell-growth/division-associated phosphorylation by a CDC2-like kinase.

The protein resides in the nucleus. It localises to the chromosome. Histones H1 are necessary for the condensation of nucleosome chains into higher-order structures. This chain is Histone H1 (HHO), found in Tetrahymena thermophila (strain SB210).